A 1026-amino-acid chain; its full sequence is Adenylate-forming reductase 06235 (1026 aa).

Positions 37–422 (FEFHAKANPD…LGRIDNQVKI (386 aa)) are adenylation (A) domain. Residues 332-333 (VT) and 412-415 (HLGR) contribute to the AMP site. The segment at 556–638 (SLVSTVGSTV…ALFIWILVTK (83 aa)) is thiolation and peptide carrier (T) domain. Residues 682–901 (CIRRVCARIY…PPTKMWVKGV (220 aa)) form a reductase (R) domain region. Residues 685–688 (RVCA), 769–771 (TAL), and Y840 each bind NADP(+).

It belongs to the adenylate-forming reductase family.

Its function is as follows. Adenylate-forming reductase, a natural product biosynthesis enzyme that resembles non-ribosomal peptide synthetases, yet serves to modify one substrate, rather than to condense two or more building blocks. The A-domain preferentially accepts L-serine, L-alanine and L-valine as substrates. The natural product of the enzyme is not yet known. The protein is Adenylate-forming reductase 06235 of Coprinopsis cinerea (strain Okayama-7 / 130 / ATCC MYA-4618 / FGSC 9003) (Inky cap fungus).